Consider the following 499-residue polypeptide: Isoflavone 2'-hydroxylase (499 aa).

C436 provides a ligand contact to heme.

This sequence belongs to the cytochrome P450 family. The cofactor is heme.

The protein resides in the membrane. It catalyses the reaction a 2'-unsubstituted isoflavone + reduced [NADPH--hemoprotein reductase] + O2 = a 2'-hydroxyisoflavone + oxidized [NADPH--hemoprotein reductase] + H2O + H(+). Catalyzes the hydroxylation of isoflavones, daidzein and formononetin, to yield 2'-hydroxyisoflavones, 2'-hydroxydaidzein, and 2'-hydroxyformononetin, respectively. This is Isoflavone 2'-hydroxylase (CYP81E1) from Glycyrrhiza echinata (Licorice).